The primary structure comprises 235 residues: Segregation and condensation protein A (235 aa).

This sequence belongs to the ScpA family. As to quaternary structure, component of a cohesin-like complex composed of ScpA, ScpB and the Smc homodimer, in which ScpA and ScpB bind to the head domain of Smc. The presence of the three proteins is required for the association of the complex with DNA.

It localises to the cytoplasm. Participates in chromosomal partition during cell division. May act via the formation of a condensin-like complex containing Smc and ScpB that pull DNA away from mid-cell into both cell halves. The polypeptide is Segregation and condensation protein A (Streptococcus mutans serotype c (strain ATCC 700610 / UA159)).